The sequence spans 69 residues: MFFLGFIIVCASEEQSDNRLPNIDFGLDRGHSGRMTAEYLMGLAAANDPNGPGRRRRSPIVREEILRHP.

An N-terminal signal peptide occupies residues 1-21 (MFFLGFIIVCASEEQSDNRLP). The disordered stretch occupies residues 46-69 (ANDPNGPGRRRRSPIVREEILRHP). The span at 60-69 (IVREEILRHP) shows a compositional bias: basic and acidic residues.

Belongs to the scoloptoxin-21 family. As to expression, expressed by the venom gland.

The protein resides in the secreted. In Scolopendra morsitans (Tanzanian blue ringleg centipede), this protein is U-scoloptoxin(21)-Sm2a.